Here is a 302-residue protein sequence, read N- to C-terminus: Pyridoxal 5'-phosphate synthase subunit PdxS (302 aa).

D32 lines the D-ribose 5-phosphate pocket. K89 (schiff-base intermediate with D-ribose 5-phosphate) is an active-site residue. D-ribose 5-phosphate is bound at residue G161. R173 is a binding site for D-glyceraldehyde 3-phosphate. D-ribose 5-phosphate is bound by residues G222 and 243–244 (GS). The tract at residues 276 to 302 (ASNPGKGMKGEANADLSEGEKLQTRGV) is disordered. Residues 293–302 (EGEKLQTRGV) are compositionally biased toward basic and acidic residues.

It belongs to the PdxS/SNZ family. In the presence of PdxT, forms a dodecamer of heterodimers.

It catalyses the reaction aldehydo-D-ribose 5-phosphate + D-glyceraldehyde 3-phosphate + L-glutamine = pyridoxal 5'-phosphate + L-glutamate + phosphate + 3 H2O + H(+). The protein operates within cofactor biosynthesis; pyridoxal 5'-phosphate biosynthesis. Functionally, catalyzes the formation of pyridoxal 5'-phosphate from ribose 5-phosphate (RBP), glyceraldehyde 3-phosphate (G3P) and ammonia. The ammonia is provided by the PdxT subunit. Can also use ribulose 5-phosphate and dihydroxyacetone phosphate as substrates, resulting from enzyme-catalyzed isomerization of RBP and G3P, respectively. The chain is Pyridoxal 5'-phosphate synthase subunit PdxS from Haloquadratum walsbyi (strain DSM 16790 / HBSQ001).